We begin with the raw amino-acid sequence, 286 residues long: MPSGKEIRNKIKSVENTRKITKAMEMVAASKMRKAQDRMRAARPYGEKIRRVAGNLSHALTEYRHPFLVNREQAAVGLILVTSDKGLCGGLNSNLLRVAVSKMKEFESQGKKLQATCIGNKGFGFMQRSGAKIVSHVTGLGDTPHLEKLIGAVKVQLDAYMNGEIDALYIGYTRFINTMKQEPVFEKLLPLSGDAVGSAKTKWDYVYEPEAKSVIDDLLIRYVEALIYQAVAENMASEQSARMVAMKSASDNAKTVIGDLKLVYNKARQAAITKELSEIVSGAAAV.

This sequence belongs to the ATPase gamma chain family. As to quaternary structure, F-type ATPases have 2 components, CF(1) - the catalytic core - and CF(0) - the membrane proton channel. CF(1) has five subunits: alpha(3), beta(3), gamma(1), delta(1), epsilon(1). CF(0) has three main subunits: a, b and c.

The protein localises to the cell inner membrane. Functionally, produces ATP from ADP in the presence of a proton gradient across the membrane. The gamma chain is believed to be important in regulating ATPase activity and the flow of protons through the CF(0) complex. This is ATP synthase gamma chain from Dechloromonas aromatica (strain RCB).